The sequence spans 196 residues: Large ribosomal subunit protein eL15 (196 aa).

A disordered region spans residues 155–196 (THRGRAERGLTSAGKKGRGQRRKGKGTEKNYPSVQAHDRRGK). Residues 169-178 (KKGRGQRRKG) show a composition bias toward basic residues.

This sequence belongs to the eukaryotic ribosomal protein eL15 family.

This chain is Large ribosomal subunit protein eL15, found in Methanocella arvoryzae (strain DSM 22066 / NBRC 105507 / MRE50).